The sequence spans 489 residues: MEKLYDKSLTELHDLLVSKEITAVDLTEETLNRIQDTEEQLGSFITVSEEKAMALAKAIDLKGITESNPLAGIPIGIKDNIVTKDILTTAGSKMLHNFDPIYDATVMDKVYQADMIPVGKLNMDEFAMGGSTETSYFKKTKNAWDQTKVPGGSSGGSASAVAAGQVPVSLGSDTGGSIRQPAAFNGIVGLKPTYGRVSRFGLIAFASSLDQIGPLTRNVKDNALALNAISGYDEKDGTSAGVSVPDFTADLTGDIKGMKIALPKEYLGEGVQPDVREAVLKAAETFKALGATVEEVSLPHSKYGIAAYYIIASSEASSNLQRFDGIRYGYRSENVQNLEDVYVNSRSEGFGTEVKRRIMLGTFSLSAGYYDAHFKKAGQVRTLIKQDFENVFADYDLIIGPSTPTVAFGLGENINDPITMYMYDILTVPVNLAGLPGMSIPAGFSEGLPVGLQIIGKHFDEHTMYKAAYAFEQATDFHTKKPVILGGND.

Catalysis depends on charge relay system residues K78 and S153. S177 acts as the Acyl-ester intermediate in catalysis.

Belongs to the amidase family. GatA subfamily. As to quaternary structure, heterotrimer of A, B and C subunits.

It catalyses the reaction L-glutamyl-tRNA(Gln) + L-glutamine + ATP + H2O = L-glutaminyl-tRNA(Gln) + L-glutamate + ADP + phosphate + H(+). Allows the formation of correctly charged Gln-tRNA(Gln) through the transamidation of misacylated Glu-tRNA(Gln) in organisms which lack glutaminyl-tRNA synthetase. The reaction takes place in the presence of glutamine and ATP through an activated gamma-phospho-Glu-tRNA(Gln). The polypeptide is Glutamyl-tRNA(Gln) amidotransferase subunit A (Enterococcus faecalis (strain ATCC 700802 / V583)).